The primary structure comprises 340 residues: uncharacterized protein (340 aa).

2 helical membrane-spanning segments follow: residues 162-182 and 239-259; these read PLVP…VLAG and FWIA…IVVP.

It is found in the cell membrane. This is an uncharacterized protein from Mycobacterium tuberculosis (strain CDC 1551 / Oshkosh).